Consider the following 177-residue polypeptide: Large ribosomal subunit protein uL10 (177 aa).

It belongs to the universal ribosomal protein uL10 family. In terms of assembly, part of the ribosomal stalk of the 50S ribosomal subunit. The N-terminus interacts with L11 and the large rRNA to form the base of the stalk. The C-terminus forms an elongated spine to which L12 dimers bind in a sequential fashion forming a multimeric L10(L12)X complex.

Forms part of the ribosomal stalk, playing a central role in the interaction of the ribosome with GTP-bound translation factors. The protein is Large ribosomal subunit protein uL10 of Caldanaerobacter subterraneus subsp. tengcongensis (strain DSM 15242 / JCM 11007 / NBRC 100824 / MB4) (Thermoanaerobacter tengcongensis).